A 95-amino-acid chain; its full sequence is uncharacterized protein (95 aa).

The helical transmembrane segment at 12-32 threads the bilayer; the sequence is LASLIVSMVVLVVGLALWFFV. Residues 66–87 are disordered; the sequence is ANEPEKEAEPATAASEPKEDED.

The protein resides in the cell membrane. This is an uncharacterized protein from Salmonella typhi.